Reading from the N-terminus, the 116-residue chain is Putative pterin-4-alpha-carbinolamine dehydratase (116 aa).

Belongs to the pterin-4-alpha-carbinolamine dehydratase family.

The enzyme catalyses (4aS,6R)-4a-hydroxy-L-erythro-5,6,7,8-tetrahydrobiopterin = (6R)-L-erythro-6,7-dihydrobiopterin + H2O. The protein is Putative pterin-4-alpha-carbinolamine dehydratase of Xylella fastidiosa (strain 9a5c).